The chain runs to 802 residues: Leucine--tRNA ligase (802 aa).

Positions 40–51 (PYPSGAGLHVGH) match the 'HIGH' region motif. The 'KMSKS' region motif lies at 576–580 (KMSKS). Lysine 579 lines the ATP pocket.

Belongs to the class-I aminoacyl-tRNA synthetase family.

Its subcellular location is the cytoplasm. The enzyme catalyses tRNA(Leu) + L-leucine + ATP = L-leucyl-tRNA(Leu) + AMP + diphosphate. The chain is Leucine--tRNA ligase from Bacillus cytotoxicus (strain DSM 22905 / CIP 110041 / 391-98 / NVH 391-98).